Reading from the N-terminus, the 445-residue chain is MKQRQFFGTDGIRGKVGAGKMTPELALKLGWAAGRVLSRSGTQKVIIGKDTRISGYLFESALEAGLSAAGLDVMLIGPMPTPAVAYLTRTFRAEAGIVISASHNPYYDNGIKFFANDGSKLDDEVELEIEAELDKPLTCVESHELGKVVRIDDAAGRYIEYCKGHFPAEQTLSGLKIVVDCAHGATYHIAPSVFKELGAEVIAIGDKPNGLNINDKVGATSMGQICETVLAENADLGIALDGDGDRIMMVNRHGRVIDGDEILYILACDAQKRGVLRGGVVGTLMSNLGLDLALQALDIPFVRSKVGDRYVMELLKEHDWRIGGENSGHILNLDHGTTGDGIVAGILVLAAMQRQNATLEELTADIKMLPQVLVNVRFEGDNDPLVSEIVLAAKAEVEQKLGARGRVLLRKSGTEPLLRVMVEGDEQEAVTEYAHYIADAVRNLV.

The active-site Phosphoserine intermediate is the Ser102. Mg(2+) contacts are provided by Ser102, Asp241, Asp243, and Asp245. Ser102 is subject to Phosphoserine.

Belongs to the phosphohexose mutase family. Requires Mg(2+) as cofactor. Activated by phosphorylation.

It carries out the reaction alpha-D-glucosamine 1-phosphate = D-glucosamine 6-phosphate. In terms of biological role, catalyzes the conversion of glucosamine-6-phosphate to glucosamine-1-phosphate. This chain is Phosphoglucosamine mutase, found in Shewanella halifaxensis (strain HAW-EB4).